The chain runs to 157 residues: Arginine regulator (157 aa).

This sequence belongs to the ArgR family.

Its subcellular location is the cytoplasm. It functions in the pathway amino-acid degradation; L-arginine degradation via ADI pathway. In terms of biological role, regulates the transcription of the arc operon, involved in arginine catabolism. This is Arginine regulator (argR1) from Streptococcus pyogenes serotype M3 (strain SSI-1).